Here is a 272-residue protein sequence, read N- to C-terminus: MKVVMTTKVDLASMNIREKLIENFGFKEDELLFDGNPVYQKDDVVILTTNQEMIYYDGLDRAIERQTGIKPEIIAFASRHSSKQKLPALTTHVTGNWGGALYGGKDESLAIAQPSAMKLALLKMNELNDLGWTVCYEATHHGPSELDVPSFFIEIGSSEEEWVNDRAGEIVAETIIYVLENYQNSKFKVAVGIGGGHYAPKQTKRALQTDLAFGHIAPKYAHPLSKELLLKAIERTAERVDAIYVDWKGSKGETRQMARAVAEELGLEFIRD.

The protein belongs to the DtdA deacylase family. In terms of assembly, monomer. The cofactor is Zn(2+).

The catalysed reaction is a D-aminoacyl-tRNA + H2O = a tRNA + a D-alpha-amino acid + H(+). It carries out the reaction glycyl-tRNA(Ala) + H2O = tRNA(Ala) + glycine + H(+). Its function is as follows. D-aminoacyl-tRNA deacylase with broad substrate specificity. By recycling D-aminoacyl-tRNA to D-amino acids and free tRNA molecules, this enzyme counteracts the toxicity associated with the formation of D-aminoacyl-tRNA entities in vivo. The polypeptide is D-aminoacyl-tRNA deacylase (Thermococcus kodakarensis (strain ATCC BAA-918 / JCM 12380 / KOD1) (Pyrococcus kodakaraensis (strain KOD1))).